Reading from the N-terminus, the 283-residue chain is Protease HtpX (283 aa).

Helical transmembrane passes span 4-24 and 33-53; these read ILLF…ILNV and GGIL…SLFL. H139 serves as a coordination point for Zn(2+). The active site involves E140. H143 provides a ligand contact to Zn(2+). Transmembrane regions (helical) follow at residues 147–167 and 190–210; these read GDMV…IFLS and IYFL…SIIA. A Zn(2+)-binding site is contributed by E218.

It belongs to the peptidase M48B family. The cofactor is Zn(2+).

It is found in the cell inner membrane. This chain is Protease HtpX, found in Haemophilus influenzae (strain 86-028NP).